The chain runs to 316 residues: Pantothenate kinase (316 aa).

95-102 (GSVAVGKS) provides a ligand contact to ATP.

This sequence belongs to the prokaryotic pantothenate kinase family.

It is found in the cytoplasm. It catalyses the reaction (R)-pantothenate + ATP = (R)-4'-phosphopantothenate + ADP + H(+). Its pathway is cofactor biosynthesis; coenzyme A biosynthesis; CoA from (R)-pantothenate: step 1/5. The chain is Pantothenate kinase from Enterobacter sp. (strain 638).